The chain runs to 56 residues: UPF0434 protein CbuG_1535 (56 aa).

This sequence belongs to the UPF0434 family.

The polypeptide is UPF0434 protein CbuG_1535 (Coxiella burnetii (strain CbuG_Q212) (Coxiella burnetii (strain Q212))).